A 342-amino-acid chain; its full sequence is Holliday junction branch migration complex subunit RuvB (342 aa).

Residues 1–184 (MEENFDIREQ…FGINLHLEYY (184 aa)) are large ATPase domain (RuvB-L). ATP contacts are provided by residues Leu23, Arg24, Gly65, Lys68, Thr69, Thr70, 131-133 (EDY), Arg174, Tyr184, and Arg221. Thr69 lines the Mg(2+) pocket. The interval 185-255 (DDDVLTSIIR…IARFALEALN (71 aa)) is small ATPAse domain (RuvB-S). A head domain (RuvB-H) region spans residues 258-342 (RYGLDEIDNK…YNSQKTLFDD (85 aa)). Positions 313 and 318 each coordinate DNA.

It belongs to the RuvB family. In terms of assembly, homohexamer. Forms an RuvA(8)-RuvB(12)-Holliday junction (HJ) complex. HJ DNA is sandwiched between 2 RuvA tetramers; dsDNA enters through RuvA and exits via RuvB. An RuvB hexamer assembles on each DNA strand where it exits the tetramer. Each RuvB hexamer is contacted by two RuvA subunits (via domain III) on 2 adjacent RuvB subunits; this complex drives branch migration. In the full resolvosome a probable DNA-RuvA(4)-RuvB(12)-RuvC(2) complex forms which resolves the HJ.

It localises to the cytoplasm. It carries out the reaction ATP + H2O = ADP + phosphate + H(+). Its function is as follows. The RuvA-RuvB-RuvC complex processes Holliday junction (HJ) DNA during genetic recombination and DNA repair, while the RuvA-RuvB complex plays an important role in the rescue of blocked DNA replication forks via replication fork reversal (RFR). RuvA specifically binds to HJ cruciform DNA, conferring on it an open structure. The RuvB hexamer acts as an ATP-dependent pump, pulling dsDNA into and through the RuvAB complex. RuvB forms 2 homohexamers on either side of HJ DNA bound by 1 or 2 RuvA tetramers; 4 subunits per hexamer contact DNA at a time. Coordinated motions by a converter formed by DNA-disengaged RuvB subunits stimulates ATP hydrolysis and nucleotide exchange. Immobilization of the converter enables RuvB to convert the ATP-contained energy into a lever motion, pulling 2 nucleotides of DNA out of the RuvA tetramer per ATP hydrolyzed, thus driving DNA branch migration. The RuvB motors rotate together with the DNA substrate, which together with the progressing nucleotide cycle form the mechanistic basis for DNA recombination by continuous HJ branch migration. Branch migration allows RuvC to scan DNA until it finds its consensus sequence, where it cleaves and resolves cruciform DNA. In Phocaeicola vulgatus (strain ATCC 8482 / DSM 1447 / JCM 5826 / CCUG 4940 / NBRC 14291 / NCTC 11154) (Bacteroides vulgatus), this protein is Holliday junction branch migration complex subunit RuvB.